Reading from the N-terminus, the 508-residue chain is 2,3-bisphosphoglycerate-independent phosphoglycerate mutase (508 aa).

Residues Asp13 and Ser63 each contribute to the Mn(2+) site. Catalysis depends on Ser63, which acts as the Phosphoserine intermediate. Substrate contacts are provided by residues His122, 152–153, Arg184, Arg190, 256–259, and Lys330; these read RD and RADR. Residues Asp397, His401, Asp438, His439, and His457 each contribute to the Mn(2+) site.

It belongs to the BPG-independent phosphoglycerate mutase family. Monomer. Requires Mn(2+) as cofactor.

The enzyme catalyses (2R)-2-phosphoglycerate = (2R)-3-phosphoglycerate. The protein operates within carbohydrate degradation; glycolysis; pyruvate from D-glyceraldehyde 3-phosphate: step 3/5. Catalyzes the interconversion of 2-phosphoglycerate and 3-phosphoglycerate. This chain is 2,3-bisphosphoglycerate-independent phosphoglycerate mutase, found in Laribacter hongkongensis (strain HLHK9).